Consider the following 404-residue polypeptide: MKGEVKKVVLAYSGGLDTSIILRWLQDQYQCEVVTFTADLGQGEELEPARAKARLMGIKEENIFIDDLREEFVRDFVFPMFRANALYEGVYLLGTSIARPLISKRQIEIANMVGADAVSHGATGKGNDQVRFEMGYYALKPDIKVIAPWRLWDLTSRTKLLDFAEKHQIPIAKDKRGEAPYSTDANLLHISYEGKALEDPWVEPFEDMYTRSVAPENAPDKPTYIEIEFEKGDAVAIDGVRLSPAALLTKLNELGGANGIGRLDLVENRFVGMKSRGVYETPGGSVLIVAHRAMESLTLDRGESHLKDELMPRYAELIYNGFWFAPERIAIQTMIDKVSENVSGTVRLKLFKGVASVVGRKSPKSLYRMDYVTFEEDSVYDQRDAQGFIKLNALRMRLAKMARG.

Residues 11–19 (AYSGGLDTS) and Ala-38 each bind ATP. L-citrulline-binding residues include Tyr-91 and Ser-96. Gly-121 contacts ATP. The L-aspartate site is built by Thr-123, Asn-127, and Asp-128. Asn-127 provides a ligand contact to L-citrulline. Positions 131, 182, 191, 267, and 279 each coordinate L-citrulline.

Belongs to the argininosuccinate synthase family. Type 1 subfamily. As to quaternary structure, homotetramer.

It is found in the cytoplasm. It catalyses the reaction L-citrulline + L-aspartate + ATP = 2-(N(omega)-L-arginino)succinate + AMP + diphosphate + H(+). The protein operates within amino-acid biosynthesis; L-arginine biosynthesis; L-arginine from L-ornithine and carbamoyl phosphate: step 2/3. This chain is Argininosuccinate synthase, found in Paramagnetospirillum magneticum (strain ATCC 700264 / AMB-1) (Magnetospirillum magneticum).